Reading from the N-terminus, the 128-residue chain is Large ribosomal subunit protein bL19 (128 aa).

This sequence belongs to the bacterial ribosomal protein bL19 family.

This protein is located at the 30S-50S ribosomal subunit interface and may play a role in the structure and function of the aminoacyl-tRNA binding site. The chain is Large ribosomal subunit protein bL19 from Verminephrobacter eiseniae (strain EF01-2).